A 512-amino-acid chain; its full sequence is 2-isopropylmalate synthase (512 aa).

In terms of domain architecture, Pyruvate carboxyltransferase spans 5–267 (LYIFDTTLRD…DSRVDATQIV (263 aa)). Mn(2+) is bound by residues D14, H202, H204, and N238. A regulatory domain region spans residues 393–512 (KLVSLKVVSE…EEKMNAQAAA (120 aa)).

Belongs to the alpha-IPM synthase/homocitrate synthase family. LeuA type 1 subfamily. In terms of assembly, homodimer. Mn(2+) is required as a cofactor.

It is found in the cytoplasm. The catalysed reaction is 3-methyl-2-oxobutanoate + acetyl-CoA + H2O = (2S)-2-isopropylmalate + CoA + H(+). The protein operates within amino-acid biosynthesis; L-leucine biosynthesis; L-leucine from 3-methyl-2-oxobutanoate: step 1/4. Catalyzes the condensation of the acetyl group of acetyl-CoA with 3-methyl-2-oxobutanoate (2-ketoisovalerate) to form 3-carboxy-3-hydroxy-4-methylpentanoate (2-isopropylmalate). The polypeptide is 2-isopropylmalate synthase (Chromobacterium violaceum (strain ATCC 12472 / DSM 30191 / JCM 1249 / CCUG 213 / NBRC 12614 / NCIMB 9131 / NCTC 9757 / MK)).